A 247-amino-acid chain; its full sequence is 5'-nucleotidase SurE (247 aa).

A divalent metal cation-binding residues include Asp-8, Asp-9, Ser-39, and Asn-91.

It belongs to the SurE nucleotidase family. Requires a divalent metal cation as cofactor.

Its subcellular location is the cytoplasm. It carries out the reaction a ribonucleoside 5'-phosphate + H2O = a ribonucleoside + phosphate. Its function is as follows. Nucleotidase that shows phosphatase activity on nucleoside 5'-monophosphates. The chain is 5'-nucleotidase SurE from Chromobacterium violaceum (strain ATCC 12472 / DSM 30191 / JCM 1249 / CCUG 213 / NBRC 12614 / NCIMB 9131 / NCTC 9757 / MK).